Reading from the N-terminus, the 332-residue chain is Eukaryotic translation initiation factor 3 subunit H (332 aa).

The MPN domain maps to 18 to 153; that stretch reads VQVDGLTVLK…LKAFRLSDEM (136 aa). Residues 251–285 are disordered; the sequence is QQQKENYLQRRQQENQSRIQRGEDPLPDEDLSKMF.

It belongs to the eIF-3 subunit H family. As to quaternary structure, component of the eukaryotic translation initiation factor 3 (eIF-3) complex.

Its subcellular location is the cytoplasm. Component of the eukaryotic translation initiation factor 3 (eIF-3) complex, which is involved in protein synthesis of a specialized repertoire of mRNAs and, together with other initiation factors, stimulates binding of mRNA and methionyl-tRNAi to the 40S ribosome. The eIF-3 complex specifically targets and initiates translation of a subset of mRNAs involved in cell proliferation. The sequence is that of Eukaryotic translation initiation factor 3 subunit H from Nematostella vectensis (Starlet sea anemone).